Reading from the N-terminus, the 338-residue chain is tRNA N6-adenosine threonylcarbamoyltransferase (338 aa).

Fe cation-binding residues include His-110 and His-114. Substrate-binding positions include 132–136 (VLSGG), Asp-165, Gly-178, and Asn-274. Residue Asp-298 coordinates Fe cation.

The protein belongs to the KAE1 / TsaD family. It depends on Fe(2+) as a cofactor.

The protein resides in the cytoplasm. The catalysed reaction is L-threonylcarbamoyladenylate + adenosine(37) in tRNA = N(6)-L-threonylcarbamoyladenosine(37) in tRNA + AMP + H(+). Required for the formation of a threonylcarbamoyl group on adenosine at position 37 (t(6)A37) in tRNAs that read codons beginning with adenine. Is involved in the transfer of the threonylcarbamoyl moiety of threonylcarbamoyl-AMP (TC-AMP) to the N6 group of A37, together with TsaE and TsaB. TsaD likely plays a direct catalytic role in this reaction. The chain is tRNA N6-adenosine threonylcarbamoyltransferase from Borrelia duttonii (strain Ly).